A 92-amino-acid polypeptide reads, in one-letter code: UPF0213 protein M28_Spy1146 (92 aa).

The GIY-YIG domain occupies 4-80; it reads KKAYMYVLEC…KRKTRSQKLA (77 aa).

The protein belongs to the UPF0213 family.

This Streptococcus pyogenes serotype M28 (strain MGAS6180) protein is UPF0213 protein M28_Spy1146.